Here is a 637-residue protein sequence, read N- to C-terminus: Threonine--tRNA ligase (637 aa).

The 61-residue stretch at 1–61 (MPNVKLPDGN…KEDCSLIIVT (61 aa)) folds into the TGS domain. The interval 242–533 (DHRKLGKALD…LIEHYAGKLP (292 aa)) is catalytic. The Zn(2+) site is built by Cys333, His384, and His510.

The protein belongs to the class-II aminoacyl-tRNA synthetase family. In terms of assembly, homodimer. The cofactor is Zn(2+).

It localises to the cytoplasm. The catalysed reaction is tRNA(Thr) + L-threonine + ATP = L-threonyl-tRNA(Thr) + AMP + diphosphate + H(+). Catalyzes the attachment of threonine to tRNA(Thr) in a two-step reaction: L-threonine is first activated by ATP to form Thr-AMP and then transferred to the acceptor end of tRNA(Thr). Also edits incorrectly charged L-seryl-tRNA(Thr). This Legionella pneumophila (strain Paris) protein is Threonine--tRNA ligase.